Reading from the N-terminus, the 332-residue chain is Adenosine deaminase (332 aa).

The Zn(2+) site is built by His12 and His14. Substrate-binding residues include His14, Asp16, and Gly170. His197 is a Zn(2+) binding site. Glu200 (proton donor) is an active-site residue. A Zn(2+)-binding site is contributed by Asp278.

The protein belongs to the metallo-dependent hydrolases superfamily. Adenosine and AMP deaminases family. Adenosine deaminase subfamily. Requires Zn(2+) as cofactor.

It catalyses the reaction adenosine + H2O + H(+) = inosine + NH4(+). The enzyme catalyses 2'-deoxyadenosine + H2O + H(+) = 2'-deoxyinosine + NH4(+). Catalyzes the hydrolytic deamination of adenosine and 2-deoxyadenosine. This Clostridium perfringens (strain SM101 / Type A) protein is Adenosine deaminase.